A 247-amino-acid chain; its full sequence is MSHRDTLFSAPIARLGDWTFDERVAEVFPDMIQRSVPGYSNIISMIGMLAERFVQPNTQVYDLGCSLGAATLSVRRNIRHEHCRIIAVDNSPAMIERCRRHIDAYKAPTPVEVVEGDIRDITIENASMVVLNFTLQFLEPAERQALLDKIYQGLNPGGALVLSEKFSFEDAKVGELLFNMHHDFKRANGYSELEISQKRSMLENVMLTDSVETHKSRLRKAGFEHSELWFQCFNFGSLVALKAGVAA.

Residues Y39, 64–66 (GCS), 89–90 (DN), 117–118 (DI), N132, and R199 contribute to the S-adenosyl-L-methionine site.

The protein belongs to the class I-like SAM-binding methyltransferase superfamily. Cx-SAM synthase family. As to quaternary structure, homodimer.

The catalysed reaction is prephenate + S-adenosyl-L-methionine = carboxy-S-adenosyl-L-methionine + 3-phenylpyruvate + H2O. Functionally, catalyzes the conversion of S-adenosyl-L-methionine (SAM) to carboxy-S-adenosyl-L-methionine (Cx-SAM). The polypeptide is Carboxy-S-adenosyl-L-methionine synthase (Salmonella choleraesuis (strain SC-B67)).